A 189-amino-acid chain; its full sequence is Peptidyl-tRNA hydrolase (189 aa).

Position 15 (Y15) interacts with tRNA. H20 functions as the Proton acceptor in the catalytic mechanism. Residues F66, N68, and N114 each contribute to the tRNA site.

This sequence belongs to the PTH family. In terms of assembly, monomer.

The protein localises to the cytoplasm. The enzyme catalyses an N-acyl-L-alpha-aminoacyl-tRNA + H2O = an N-acyl-L-amino acid + a tRNA + H(+). Its function is as follows. Hydrolyzes ribosome-free peptidyl-tRNAs (with 1 or more amino acids incorporated), which drop off the ribosome during protein synthesis, or as a result of ribosome stalling. Functionally, catalyzes the release of premature peptidyl moieties from peptidyl-tRNA molecules trapped in stalled 50S ribosomal subunits, and thus maintains levels of free tRNAs and 50S ribosomes. The protein is Peptidyl-tRNA hydrolase of Streptococcus suis (strain 98HAH33).